We begin with the raw amino-acid sequence, 596 residues long: Elongation factor 4 (596 aa).

The region spanning 2–184 (KHIRNFSIIA…EIVAKIPPPV (183 aa)) is the tr-type G domain. Residues 14-19 (DHGKST) and 131-134 (NKID) each bind GTP.

It belongs to the TRAFAC class translation factor GTPase superfamily. Classic translation factor GTPase family. LepA subfamily.

It localises to the cell inner membrane. It carries out the reaction GTP + H2O = GDP + phosphate + H(+). In terms of biological role, required for accurate and efficient protein synthesis under certain stress conditions. May act as a fidelity factor of the translation reaction, by catalyzing a one-codon backward translocation of tRNAs on improperly translocated ribosomes. Back-translocation proceeds from a post-translocation (POST) complex to a pre-translocation (PRE) complex, thus giving elongation factor G a second chance to translocate the tRNAs correctly. Binds to ribosomes in a GTP-dependent manner. The chain is Elongation factor 4 from Shewanella denitrificans (strain OS217 / ATCC BAA-1090 / DSM 15013).